We begin with the raw amino-acid sequence, 1076 residues long: Inositol-1,4,5-trisphosphate 5-phosphatase 1 (1076 aa).

The SAC domain maps to 144–474 (LRKLLTNGSF…GDALARIYTG (331 aa)). Residues 534–880 (YDPIHEYVNH…QEVRDASQTS (347 aa)) are catalytic. Disordered stretches follow at residues 930-958 (AAPP…DWIS) and 977-1076 (LSPA…KPLV). 2 stretches are compositionally biased toward low complexity: residues 977-1004 (LSPA…IKPN) and 1025-1040 (SGSS…LTPV). The segment covering 1065 to 1076 (PEESSISWKPLV) has biased composition (polar residues).

This sequence belongs to the synaptojanin family. In the central section; belongs to the inositol 1,4,5-trisphosphate 5-phosphatase family. The cofactor is Mg(2+).

The protein resides in the cytoplasm. It carries out the reaction a 1,2-diacyl-sn-glycero-3-phospho-(1D-myo-inositol-4,5-bisphosphate) + H2O = a 1,2-diacyl-sn-glycero-3-phospho-(1D-myo-inositol 4-phosphate) + phosphate. In terms of biological role, controls the cellular levels and subcellular distribution of phosphatidylinositol 3-phosphate and phosphatidylinositol 4,5-bisphosphate. Involved in distinct membrane trafficking and signal transduction pathways. Highly active against a range of soluble and lipid inositol phosphates. Active in dephosphorylating the 5-position of Ins(1,4,5)P3 and Ins(1,3,4,5)P4 and to a lesser extent Ins(1,4,5,6)P4. The enzyme is also active against PI(4,5)P2 presented in sonicated vesicles and Triton mixed micelles, and somewhat less active against PI(3,5)P2 in unilamellar vesicles. Activity against PI(3,5)P2 drops sharply when this substrate is presented in mixed micelles. Also hydrolyzes PIP3 to produce PI(3,4)P2. This Schizosaccharomyces pombe (strain 972 / ATCC 24843) (Fission yeast) protein is Inositol-1,4,5-trisphosphate 5-phosphatase 1 (syj1).